The sequence spans 157 residues: NADPH-dependent 7-cyano-7-deazaguanine reductase (157 aa).

Cys-56 (thioimide intermediate) is an active-site residue. Asp-63 serves as the catalytic Proton donor. Substrate contacts are provided by residues Val-78–Ser-80 and His-97–Glu-98.

The protein belongs to the GTP cyclohydrolase I family. QueF type 1 subfamily.

It is found in the cytoplasm. The catalysed reaction is 7-aminomethyl-7-carbaguanine + 2 NADP(+) = 7-cyano-7-deazaguanine + 2 NADPH + 3 H(+). Its pathway is tRNA modification; tRNA-queuosine biosynthesis. In terms of biological role, catalyzes the NADPH-dependent reduction of 7-cyano-7-deazaguanine (preQ0) to 7-aminomethyl-7-deazaguanine (preQ1). The sequence is that of NADPH-dependent 7-cyano-7-deazaguanine reductase from Parabacteroides distasonis (strain ATCC 8503 / DSM 20701 / CIP 104284 / JCM 5825 / NCTC 11152).